A 341-amino-acid polypeptide reads, in one-letter code: Glyceraldehyde-3-phosphate dehydrogenase 2 (341 aa).

Residues 12 to 13, Arg78, and Thr120 each bind NAD(+); that span reads RI. D-glyceraldehyde 3-phosphate-binding positions include 152 to 154 and Thr183; that span reads SCT. The active-site Nucleophile is Cys153. Asn184 is an NAD(+) binding site. D-glyceraldehyde 3-phosphate-binding positions include Arg198, 211–212, and Arg234; that span reads TG. An NAD(+)-binding site is contributed by Asn313.

The protein belongs to the glyceraldehyde-3-phosphate dehydrogenase family. In terms of assembly, homotetramer.

It is found in the cytoplasm. It carries out the reaction D-glyceraldehyde 3-phosphate + phosphate + NAD(+) = (2R)-3-phospho-glyceroyl phosphate + NADH + H(+). The protein operates within carbohydrate degradation; glycolysis; pyruvate from D-glyceraldehyde 3-phosphate: step 1/5. Catalyzes the oxidative phosphorylation of glyceraldehyde 3-phosphate (G3P) to 1,3-bisphosphoglycerate (BPG) using the cofactor NAD. The first reaction step involves the formation of a hemiacetal intermediate between G3P and a cysteine residue, and this hemiacetal intermediate is then oxidized to a thioester, with concomitant reduction of NAD to NADH. The reduced NADH is then exchanged with the second NAD, and the thioester is attacked by a nucleophilic inorganic phosphate to produce BPG. The sequence is that of Glyceraldehyde-3-phosphate dehydrogenase 2 (gapA2) from Staphylococcus aureus (strain MRSA252).